A 140-amino-acid polypeptide reads, in one-letter code: Nucleoside diphosphate kinase (140 aa).

ATP contacts are provided by Lys11, Phe59, Arg87, Thr93, Arg104, and Asn114. His117 functions as the Pros-phosphohistidine intermediate in the catalytic mechanism.

It belongs to the NDK family. In terms of assembly, homotetramer. Requires Mg(2+) as cofactor.

The protein localises to the cytoplasm. It carries out the reaction a 2'-deoxyribonucleoside 5'-diphosphate + ATP = a 2'-deoxyribonucleoside 5'-triphosphate + ADP. It catalyses the reaction a ribonucleoside 5'-diphosphate + ATP = a ribonucleoside 5'-triphosphate + ADP. Its function is as follows. Major role in the synthesis of nucleoside triphosphates other than ATP. The ATP gamma phosphate is transferred to the NDP beta phosphate via a ping-pong mechanism, using a phosphorylated active-site intermediate. This is Nucleoside diphosphate kinase from Hyphomonas neptunium (strain ATCC 15444).